A 375-amino-acid chain; its full sequence is Actin, cytoplasmic (375 aa).

This sequence belongs to the actin family.

It is found in the cytoplasm. It localises to the cytoskeleton. The catalysed reaction is ATP + H2O = ADP + phosphate + H(+). In terms of biological role, actins are highly conserved proteins that are involved in various types of cell motility and are ubiquitously expressed in all eukaryotic cells. This is Actin, cytoplasmic from Oxytricha trifallax (Sterkiella histriomuscorum).